The sequence spans 318 residues: Aspartate carbamoyltransferase catalytic subunit (318 aa).

Carbamoyl phosphate is bound by residues Arg-56 and Thr-57. An L-aspartate-binding site is contributed by Lys-84. Residues Arg-106, His-143, and Gln-146 each coordinate carbamoyl phosphate. Residues Arg-176 and Arg-230 each contribute to the L-aspartate site. Residues Gly-271 and Pro-272 each coordinate carbamoyl phosphate.

The protein belongs to the aspartate/ornithine carbamoyltransferase superfamily. ATCase family. Heterododecamer (2C3:3R2) of six catalytic PyrB chains organized as two trimers (C3), and six regulatory PyrI chains organized as three dimers (R2).

It catalyses the reaction carbamoyl phosphate + L-aspartate = N-carbamoyl-L-aspartate + phosphate + H(+). It participates in pyrimidine metabolism; UMP biosynthesis via de novo pathway; (S)-dihydroorotate from bicarbonate: step 2/3. In terms of biological role, catalyzes the condensation of carbamoyl phosphate and aspartate to form carbamoyl aspartate and inorganic phosphate, the committed step in the de novo pyrimidine nucleotide biosynthesis pathway. The protein is Aspartate carbamoyltransferase catalytic subunit of Mycobacterium avium (strain 104).